Reading from the N-terminus, the 218-residue chain is Adenylate kinase (218 aa).

Residue 10–15 (GAGKGT) coordinates ATP. Residues 30–59 (STGDMLRAAVKAATPLGLAAKKIMDEGGLV) are NMP. AMP is bound by residues threonine 31, arginine 36, 57–59 (GLV), 85–88 (GFPR), and glutamine 92. Positions 122 to 159 (GRRVHLASGRTYHVTFNPPAVPDKDDLTGEPLVQRNDD) are LID. ATP is bound by residues arginine 123 and 132–133 (TY). AMP contacts are provided by arginine 156 and arginine 167. Glycine 203 is a binding site for ATP.

It belongs to the adenylate kinase family. Monomer.

The protein localises to the cytoplasm. It catalyses the reaction AMP + ATP = 2 ADP. Its pathway is purine metabolism; AMP biosynthesis via salvage pathway; AMP from ADP: step 1/1. In terms of biological role, catalyzes the reversible transfer of the terminal phosphate group between ATP and AMP. Plays an important role in cellular energy homeostasis and in adenine nucleotide metabolism. This chain is Adenylate kinase, found in Chlorobaculum tepidum (strain ATCC 49652 / DSM 12025 / NBRC 103806 / TLS) (Chlorobium tepidum).